The chain runs to 206 residues: Thymidylate kinase (206 aa).

Residue 11 to 18 (GIDGAGKT) coordinates ATP.

Belongs to the thymidylate kinase family.

The enzyme catalyses dTMP + ATP = dTDP + ADP. In terms of biological role, phosphorylation of dTMP to form dTDP in both de novo and salvage pathways of dTTP synthesis. The polypeptide is Thymidylate kinase (Paraburkholderia phytofirmans (strain DSM 17436 / LMG 22146 / PsJN) (Burkholderia phytofirmans)).